A 76-amino-acid polypeptide reads, in one-letter code: Exodeoxyribonuclease 7 small subunit (76 aa).

Belongs to the XseB family. As to quaternary structure, heterooligomer composed of large and small subunits.

The protein resides in the cytoplasm. The catalysed reaction is Exonucleolytic cleavage in either 5'- to 3'- or 3'- to 5'-direction to yield nucleoside 5'-phosphates.. Bidirectionally degrades single-stranded DNA into large acid-insoluble oligonucleotides, which are then degraded further into small acid-soluble oligonucleotides. This is Exodeoxyribonuclease 7 small subunit from Gluconacetobacter diazotrophicus (strain ATCC 49037 / DSM 5601 / CCUG 37298 / CIP 103539 / LMG 7603 / PAl5).